The chain runs to 428 residues: Trigger factor (428 aa).

The 86-residue stretch at Gly-163–Pro-248 folds into the PPIase FKBP-type domain.

Belongs to the FKBP-type PPIase family. Tig subfamily.

The protein resides in the cytoplasm. The enzyme catalyses [protein]-peptidylproline (omega=180) = [protein]-peptidylproline (omega=0). Involved in protein export. Acts as a chaperone by maintaining the newly synthesized protein in an open conformation. Functions as a peptidyl-prolyl cis-trans isomerase. The chain is Trigger factor from Geobacillus kaustophilus (strain HTA426).